The chain runs to 361 residues: Chorismate synthase (361 aa).

Residues arginine 48 and arginine 54 each coordinate NADP(+). Residues 125 to 127 (RSS), 240 to 241 (NA), glycine 286, 301 to 305 (KPTSS), and arginine 327 contribute to the FMN site.

This sequence belongs to the chorismate synthase family. Homotetramer. The cofactor is FMNH2.

The enzyme catalyses 5-O-(1-carboxyvinyl)-3-phosphoshikimate = chorismate + phosphate. It functions in the pathway metabolic intermediate biosynthesis; chorismate biosynthesis; chorismate from D-erythrose 4-phosphate and phosphoenolpyruvate: step 7/7. Catalyzes the anti-1,4-elimination of the C-3 phosphate and the C-6 proR hydrogen from 5-enolpyruvylshikimate-3-phosphate (EPSP) to yield chorismate, which is the branch point compound that serves as the starting substrate for the three terminal pathways of aromatic amino acid biosynthesis. This reaction introduces a second double bond into the aromatic ring system. The sequence is that of Chorismate synthase from Magnetococcus marinus (strain ATCC BAA-1437 / JCM 17883 / MC-1).